Reading from the N-terminus, the 86-residue chain is Cell division topological specificity factor (86 aa).

The protein belongs to the MinE family.

Functionally, prevents the cell division inhibition by proteins MinC and MinD at internal division sites while permitting inhibition at polar sites. This ensures cell division at the proper site by restricting the formation of a division septum at the midpoint of the long axis of the cell. The polypeptide is Cell division topological specificity factor (Rhizobium rhizogenes (strain K84 / ATCC BAA-868) (Agrobacterium radiobacter)).